The chain runs to 500 residues: Cytochrome P450 2D20 (500 aa).

Residue Cys446 participates in heme binding.

This sequence belongs to the cytochrome P450 family. It depends on heme as a cofactor.

It localises to the endoplasmic reticulum membrane. Its subcellular location is the microsome membrane. In Mesocricetus auratus (Golden hamster), this protein is Cytochrome P450 2D20 (CYP2D20).